The primary structure comprises 324 residues: Acetyl-coenzyme A carboxylase carboxyl transferase subunit alpha (324 aa).

In terms of domain architecture, CoA carboxyltransferase C-terminal spans 44 to 298 (ILQRKLLNLK…KNKIRDQLDF (255 aa)).

Belongs to the AccA family. In terms of assembly, acetyl-CoA carboxylase is a heterohexamer composed of biotin carboxyl carrier protein (accB), biotin carboxylase (accC) and two subunits each of ACCase subunit alpha (accA) and ACCase subunit beta (accD).

It localises to the plastid. The protein localises to the chloroplast. The enzyme catalyses N(6)-carboxybiotinyl-L-lysyl-[protein] + acetyl-CoA = N(6)-biotinyl-L-lysyl-[protein] + malonyl-CoA. Its pathway is lipid metabolism; malonyl-CoA biosynthesis; malonyl-CoA from acetyl-CoA: step 1/1. Its function is as follows. Component of the acetyl coenzyme A carboxylase (ACC) complex. First, biotin carboxylase catalyzes the carboxylation of biotin on its carrier protein (BCCP) and then the CO(2) group is transferred by the carboxyltransferase to acetyl-CoA to form malonyl-CoA. The sequence is that of Acetyl-coenzyme A carboxylase carboxyl transferase subunit alpha from Cyanidium caldarium (Red alga).